The primary structure comprises 37 residues: Cytochrome b6-f complex subunit 5 (37 aa).

The helical transmembrane segment at 5–25 (ILLGIVLGMVLVTLAGLFVAA) threads the bilayer.

The protein belongs to the PetG family. In terms of assembly, the 4 large subunits of the cytochrome b6-f complex are cytochrome b6, subunit IV (17 kDa polypeptide, PetD), cytochrome f and the Rieske protein, while the 4 small subunits are PetG, PetL, PetM and PetN. The complex functions as a dimer.

The protein resides in the cellular thylakoid membrane. Functionally, component of the cytochrome b6-f complex, which mediates electron transfer between photosystem II (PSII) and photosystem I (PSI), cyclic electron flow around PSI, and state transitions. PetG is required for either the stability or assembly of the cytochrome b6-f complex. This is Cytochrome b6-f complex subunit 5 from Synechococcus sp. (strain JA-3-3Ab) (Cyanobacteria bacterium Yellowstone A-Prime).